A 177-amino-acid chain; its full sequence is Dynein light chain Tctex-type 5-A (177 aa).

The protein belongs to the dynein light chain Tctex-type family.

This Xenopus laevis (African clawed frog) protein is Dynein light chain Tctex-type 5-A (Dynlt5-a).